The chain runs to 436 residues: Probable mediator of RNA polymerase II transcription subunit 26b (436 aa).

The segment at 71–111 (PGDDEANRGTTGNGGGGTAVDEDYEVAGGSKESKANSSRGD) is disordered. In terms of domain architecture, TFIIS N-terminal spans 139–214 (KEVARIKEIL…AEWKELVDQW (76 aa)). Positions 263-376 (HFFDSLDFDG…PQQEKLKGLD (114 aa)) are disordered. 2 stretches are compositionally biased toward basic and acidic residues: residues 276-290 (NSEE…ERRP) and 332-350 (TEQR…EKPM). A coiled-coil region spans residues 382–402 (EFAKRKLQESYQHHENAKKQR). Residues 408–436 (EMIPKQGSAQKPQLKRPGMSNRNWANGRK) are disordered. Positions 427-436 (SNRNWANGRK) are enriched in polar residues.

This sequence belongs to the Mediator complex subunit 26 family. In terms of assembly, component of the Mediator complex.

It localises to the nucleus. Its function is as follows. Component of the Mediator complex, a coactivator involved in the regulated transcription of nearly all RNA polymerase II-dependent genes. Mediator functions as a bridge to convey information from gene-specific regulatory proteins to the basal RNA polymerase II transcription machinery. The Mediator complex, having a compact conformation in its free form, is recruited to promoters by direct interactions with regulatory proteins and serves for the assembly of a functional preinitiation complex with RNA polymerase II and the general transcription factors. May play a role in transcription elongation. This chain is Probable mediator of RNA polymerase II transcription subunit 26b (MED26B), found in Arabidopsis thaliana (Mouse-ear cress).